A 507-amino-acid chain; its full sequence is Chromosomal replication initiator protein DnaA (507 aa).

Residues 1-112 (MTDDPGSGFT…PATDEADDTT (112 aa)) form a domain I, interacts with DnaA modulators region. The disordered stretch occupies residues 99–155 (RIAPPATDEADDTTVPPSENPATTSPDTTTDNDEIDDSAAARGDNQHSWPSYFTERP). Over residues 113 to 127 (VPPSENPATTSPDTT) the composition is skewed to polar residues. Residues 113 to 166 (VPPSENPATTSPDTTTDNDEIDDSAAARGDNQHSWPSYFTERPHNTDSATAGVT) form a domain II region. Positions 167 to 383 (SLNRRYTFDT…GALIRVTAFA (217 aa)) are domain III, AAA+ region. Positions 211, 213, 214, and 215 each coordinate ATP. Residues 384–507 (SLNKTPIDKA…TTRIRQRSKR (124 aa)) are domain IV, binds dsDNA.

It belongs to the DnaA family. In terms of assembly, oligomerizes as a right-handed, spiral filament on DNA at oriC.

The protein localises to the cytoplasm. In terms of biological role, plays an essential role in the initiation and regulation of chromosomal replication. ATP-DnaA binds to the origin of replication (oriC) to initiate formation of the DNA replication initiation complex once per cell cycle. Binds the DnaA box (a 9 base pair repeat at the origin) and separates the double-stranded (ds)DNA. Forms a right-handed helical filament on oriC DNA; dsDNA binds to the exterior of the filament while single-stranded (ss)DNA is stabiized in the filament's interior. The ATP-DnaA-oriC complex binds and stabilizes one strand of the AT-rich DNA unwinding element (DUE), permitting loading of DNA polymerase. After initiation quickly degrades to an ADP-DnaA complex that is not apt for DNA replication. Binds acidic phospholipids. This is Chromosomal replication initiator protein DnaA from Mycobacterium tuberculosis (strain ATCC 25177 / H37Ra).